The chain runs to 156 residues: 3-hydroxyacyl-[acyl-carrier-protein] dehydratase FabZ (156 aa).

H54 is a catalytic residue.

This sequence belongs to the thioester dehydratase family. FabZ subfamily.

It is found in the cytoplasm. The enzyme catalyses a (3R)-hydroxyacyl-[ACP] = a (2E)-enoyl-[ACP] + H2O. In terms of biological role, involved in unsaturated fatty acids biosynthesis. Catalyzes the dehydration of short chain beta-hydroxyacyl-ACPs and long chain saturated and unsaturated beta-hydroxyacyl-ACPs. This Koribacter versatilis (strain Ellin345) protein is 3-hydroxyacyl-[acyl-carrier-protein] dehydratase FabZ.